The following is a 368-amino-acid chain: Quinolinate synthase (368 aa).

Iminosuccinate is bound by residues H46 and S63. Position 110 (C110) interacts with [4Fe-4S] cluster. Residues 141-143 and S162 each bind iminosuccinate; that span reads YVN. Position 230 (C230) interacts with [4Fe-4S] cluster. Residues 256–258 and T273 each bind iminosuccinate; that span reads HPE. C320 lines the [4Fe-4S] cluster pocket.

It belongs to the quinolinate synthase family. Type 3 subfamily. Requires [4Fe-4S] cluster as cofactor.

It localises to the cytoplasm. It catalyses the reaction iminosuccinate + dihydroxyacetone phosphate = quinolinate + phosphate + 2 H2O + H(+). It functions in the pathway cofactor biosynthesis; NAD(+) biosynthesis; quinolinate from iminoaspartate: step 1/1. Functionally, catalyzes the condensation of iminoaspartate with dihydroxyacetone phosphate to form quinolinate. In Bacillus cereus (strain B4264), this protein is Quinolinate synthase.